Here is a 477-residue protein sequence, read N- to C-terminus: Myc-associated zinc finger protein (477 aa).

2 disordered regions span residues 59–78 and 121–144; these read AQSPFQAAPAPPPTPQAPAA and TVDTAALKQPPAPPPPPPAVSAPA. Positions 130–140 are enriched in pro residues; sequence PPAPPPPPPAV. 4 C2H2-type zinc fingers span residues 190 to 212, 279 to 301, 307 to 329, and 337 to 360; these read YICALCAKEFKNGYNLRRHEAIH, HACEMCGKAFRDVYHLNRHKLSH, YQCPVCQQRFKRKDRMSYHVRSH, and YNCSHCGKSFSRPDHLNSHVRQVH. Position 361 is a phosphoserine (Ser-361). Residues 366–388 form a C2H2-type 5 zinc finger; that stretch reads FKCEKCEAAFATKDRLRAHTVRH. The C2H2-type 6; atypical zinc-finger motif lies at 392 to 413; the sequence is VPCHVCGKMLSSAYISDHMKVH.

In terms of assembly, interacts with BPTF. In terms of tissue distribution, expressed in Purkinje cells in the brain (at protein level).

Its subcellular location is the nucleus. Its function is as follows. Transcriptional regulator. Acts as a transcriptional activator that binds to purine-rich GAGA sites found in the promoter of many genes including insulin I and II and islet amyloid polypeptide. In Mus musculus (Mouse), this protein is Myc-associated zinc finger protein (Maz).